Here is a 612-residue protein sequence, read N- to C-terminus: uncharacterized protein (612 aa).

This is an uncharacterized protein from Rickettsia prowazekii (strain Madrid E).